A 510-amino-acid polypeptide reads, in one-letter code: Propionyl-CoA carboxylase beta chain (510 aa).

The 257-residue stretch at 1–257 (MKDILEQLED…NNREKPPVRP (257 aa)) folds into the CoA carboxyltransferase N-terminal domain. The segment at 1–504 (MKDILEQLED…NKSVQMPWKK (504 aa)) is carboxyltransferase. Positions 261–504 (DPDRIEPSLD…NKSVQMPWKK (244 aa)) constitute a CoA carboxyltransferase C-terminal domain. The acyl-CoA binding stretch occupies residues 292–325 (DEGDFYEIQEEFAKNIITGFIRLEGRTVGVVANQ).

It belongs to the AccD/PCCB family. The holoenzyme is a dodecamer composed of 6 PccA/alpha subunits and 6 PccB/beta subunits.

It carries out the reaction propanoyl-CoA + hydrogencarbonate + ATP = (S)-methylmalonyl-CoA + ADP + phosphate + H(+). Its pathway is metabolic intermediate metabolism; propanoyl-CoA degradation; succinyl-CoA from propanoyl-CoA: step 1/3. This is one of the 2 subunits of the biotin-dependent propionyl-CoA carboxylase (PCC), the enzyme catalyzing the carboxylation of propionyl-CoA/propanoyl-CoA to D-methylmalonyl-CoA/(S)-methylmalonyl-CoA. Within the holoenzyme, the alpha subunit catalyzes the ATP-dependent carboxylation of the biotin carried by the biotin carboxyl carrier (BCC) domain, while the beta subunit then tranfers the carboxyl group from carboxylated biotin to propionyl-CoA. In Roseobacter denitrificans (strain ATCC 33942 / OCh 114) (Erythrobacter sp. (strain OCh 114)), this protein is Propionyl-CoA carboxylase beta chain.